The sequence spans 475 residues: AP-1 complex subunit mu-1-I (475 aa).

The region spanning 175–473 (KNEAFLDIVE…TQSGDDYTIR (299 aa)) is the MHD domain. Positions 240–262 (ASATTSDNNTETDKKPSITSSSA) are disordered.

It belongs to the adaptor complexes medium subunit family. Adaptor protein complex 1 (AP-1) is a heterotetramer composed of two large adaptins (gamma-type subunit APL4 and beta-type subunit APL2), a medium adaptin (mu-type subunit APM1) and a small adaptin (sigma-type subunit APS1). AP-1 interacts with clathrin.

The protein resides in the cytoplasmic vesicle. It localises to the clathrin-coated vesicle membrane. It is found in the membrane. The protein localises to the clathrin-coated pit. Functionally, component of the adaptor complexes which link clathrin to receptors in coated vesicles. Clathrin-associated protein complexes are believed to interact with the cytoplasmic tails of membrane proteins, leading to their selection and concentration. The AP-1 complex interacts directly with clathrin. AP57 is probably a subunit of the Golgi membrane adaptor. The polypeptide is AP-1 complex subunit mu-1-I (APM1) (Saccharomyces cerevisiae (strain ATCC 204508 / S288c) (Baker's yeast)).